Here is a 307-residue protein sequence, read N- to C-terminus: NAD kinase (307 aa).

Aspartate 80 (proton acceptor) is an active-site residue. NAD(+)-binding positions include 80–81 (DG), histidine 85, 154–155 (ND), histidine 165, histidine 182, aspartate 184, 195–200 (TAYALS), and glutamine 254.

It belongs to the NAD kinase family. It depends on a divalent metal cation as a cofactor.

The protein resides in the cytoplasm. The catalysed reaction is NAD(+) + ATP = ADP + NADP(+) + H(+). In terms of biological role, involved in the regulation of the intracellular balance of NAD and NADP, and is a key enzyme in the biosynthesis of NADP. Catalyzes specifically the phosphorylation on 2'-hydroxyl of the adenosine moiety of NAD to yield NADP. The sequence is that of NAD kinase from Acinetobacter baylyi (strain ATCC 33305 / BD413 / ADP1).